The chain runs to 518 residues: Suppressor of hairless homolog (518 aa).

The interval 22–59 is disordered; the sequence is ETDQQRSHVKERVNGTPNQNGGTSTSSKPRSVFENRPP. Over residues 24 to 34 the composition is skewed to basic and acidic residues; the sequence is DQQRSHVKERV. Over residues 36–50 the composition is skewed to polar residues; that stretch reads GTPNQNGGTSTSSKP. DNA-binding regions lie at residues 89-96, 223-232, and 296-328; these read KSYGNEKR, RLRSQTVSTR, and RKVDKQTAILNADDPVSQLHKCAFYLKDSERMY. Positions 386–476 constitute an IPT/TIG domain; it reads PVVHSLQLNG…YPTNLTFTFT (91 aa).

Belongs to the Su(H) family. As to quaternary structure, interacts with activated Notch proteins.

Its subcellular location is the nucleus. In terms of biological role, transcriptional regulator that plays a central role in Notch signaling, a signaling pathway involved in cell-cell communication that regulates a broad spectrum of cell-fate determinations. Acts as a transcriptional repressor when it is not associated with Notch proteins. When associated with some Notch protein, it acts as a transcriptional activator that activates transcription of Notch target genes. The polypeptide is Suppressor of hairless homolog (RBP-JK) (Halocynthia roretzi (Sea squirt)).